Reading from the N-terminus, the 872-residue chain is Bifunctional heparan sulfate N-deacetylase/N-sulfotransferase 4 (872 aa).

Topologically, residues 1–13 are cytoplasmic; sequence MNLILKFRRSFRT. A helical; Signal-anchor for type II membrane protein membrane pass occupies residues 14 to 34; that stretch reads LIVLLATFCLVSILISAYFLY. The Lumenal segment spans residues 35–872; the sequence is SGYKQEMTLI…WLRQELQKVR (838 aa). Residues 36 to 588 form a heparan sulfate N-deacetylase 4 region; sequence GYKQEMTLIE…KRHKDIWSRE (553 aa). N-linked (GlcNAc...) asparagine glycans are attached at residues Asn226, Asn341, and Asn391. A heparan sulfate N-sulfotransferase 4 region spans residues 589-872; that stretch reads KTCDHLPKFL…WLRQELQKVR (284 aa). Catalysis depends on Lys604, which acts as the For sulfotransferase activity. 604 to 608 serves as a coordination point for 3'-phosphoadenylyl sulfate; it reads KTGTT. The N-linked (GlcNAc...) asparagine glycan is linked to Asn657. Ser702 serves as a coordination point for 3'-phosphoadenylyl sulfate. Asn793 is a glycosylation site (N-linked (GlcNAc...) asparagine). An intrachain disulfide couples Cys808 to Cys818. 823-827 provides a ligand contact to 3'-phosphoadenylyl sulfate; it reads KGRKY.

The protein belongs to the sulfotransferase 1 family. NDST subfamily. As to quaternary structure, monomer. Expressed at low level in brain and throughout embryogenesis. Not expressed in other tissues.

Its subcellular location is the golgi apparatus membrane. It carries out the reaction alpha-D-glucosaminyl-[heparan sulfate](n) + 3'-phosphoadenylyl sulfate = N-sulfo-alpha-D-glucosaminyl-[heparan sulfate](n) + adenosine 3',5'-bisphosphate + 2 H(+). It participates in glycan metabolism; heparan sulfate biosynthesis. The protein operates within glycan metabolism; heparin biosynthesis. Essential bifunctional enzyme that catalyzes both the N-deacetylation and the N-sulfation of glucosamine (GlcNAc) of the glycosaminoglycan in heparan sulfate. Modifies the GlcNAc-GlcA disaccharide repeating sugar backbone to make N-sulfated heparosan, a prerequisite substrate for later modifications in heparin biosynthesis. Has low deacetylase activity but high sulfotransferase activity. In Mus musculus (Mouse), this protein is Bifunctional heparan sulfate N-deacetylase/N-sulfotransferase 4 (Ndst4).